Consider the following 379-residue polypeptide: Tryptophan 2,3-dioxygenase (379 aa).

Residues 57 to 61 (FIITH) and arginine 128 each bind substrate. Residue histidine 312 coordinates heme. Threonine 327 is a binding site for substrate.

This sequence belongs to the tryptophan 2,3-dioxygenase family. Homotetramer. Dimer of dimers. Requires heme as cofactor.

It catalyses the reaction L-tryptophan + O2 = N-formyl-L-kynurenine. It functions in the pathway amino-acid degradation; L-tryptophan degradation via kynurenine pathway; L-kynurenine from L-tryptophan: step 1/2. Its pathway is pigment biosynthesis; ommochrome biosynthesis. Functionally, heme-dependent dioxygenase that catalyzes the oxidative cleavage of the L-tryptophan (L-Trp) pyrrole ring and converts L-tryptophan to N-formyl-L-kynurenine. Catalyzes the oxidative cleavage of the indole moiety. Required during larval growth to control the level of potentially harmful free tryptophan in the hemolymph. In the adult the same reaction is the first step in the ommochrome biosynthetic pathway. This is Tryptophan 2,3-dioxygenase from Drosophila melanogaster (Fruit fly).